The following is a 367-amino-acid chain: Flagellar P-ring protein (367 aa).

Positions 1–24 (MLRPIITLLCLTLMLCTAAGPAGA) are cleaved as a signal peptide.

Belongs to the FlgI family. As to quaternary structure, the basal body constitutes a major portion of the flagellar organelle and consists of four rings (L,P,S, and M) mounted on a central rod.

It localises to the periplasm. The protein resides in the bacterial flagellum basal body. Functionally, assembles around the rod to form the L-ring and probably protects the motor/basal body from shearing forces during rotation. The protein is Flagellar P-ring protein of Syntrophotalea carbinolica (strain DSM 2380 / NBRC 103641 / GraBd1) (Pelobacter carbinolicus).